A 265-amino-acid polypeptide reads, in one-letter code: MALQIPSLLLSAAVVVLMVLSSPRTEGGNSERHFVAQLKGECYFTNGTQRIRSVNRYIYNREEWVRFDSDVGEYRAVTELGRPDAEYWNSQPEILERTRAEVDTVCRHNYEGVETHTSLRRLEQPNVAISLSRTEALNHHNTLVCSVTDFYPAKIKVRWFRNGQEETVGVSSTQLIRNGDWTFQVLVMLEMTPHQGEVYTCHVEHPSLKSPITVEWRAQSESARSKMLSGIGGCVLGVIFLGLGLFIRHRSQKGPRGPPPAGLLQ.

Residues 1–27 form the signal peptide; that stretch reads MALQIPSLLLSAAVVVLMVLSSPRTEG. Residues 28–122 form a beta-1 region; that stretch reads GNSERHFVAQ…VETHTSLRRL (95 aa). Over 28–227 the chain is Extracellular; sequence GNSERHFVAQ…AQSESARSKM (200 aa). Disulfide bonds link Cys-42–Cys-106 and Cys-145–Cys-201. Residue Asn-46 is glycosylated (N-linked (GlcNAc...) asparagine). Residues 123 to 217 are beta-2; sequence EQPNVAISLS…LKSPITVEWR (95 aa). One can recognise an Ig-like C1-type domain in the interval 125 to 213; that stretch reads PNVAISLSRT…EHPSLKSPIT (89 aa). The tract at residues 218–227 is connecting peptide; that stretch reads AQSESARSKM. Residues 228–247 form a helical membrane-spanning segment; the sequence is LSGIGGCVLGVIFLGLGLFI. Over 248 to 265 the chain is Cytoplasmic; that stretch reads RHRSQKGPRGPPPAGLLQ.

Belongs to the MHC class II family. Post-translationally, ubiquitinated in immature dendritic cells leading to down-regulation of MHC class II.

Its subcellular location is the membrane. The polypeptide is H-2 class II histocompatibility antigen, A-Q beta chain (H2-Ab1) (Mus musculus (Mouse)).